The sequence spans 635 residues: Threonine--tRNA ligase (635 aa).

The TGS domain occupies methionine 1–threonine 61. Residues aspartate 242–proline 533 are catalytic. Cysteine 333, histidine 384, and histidine 510 together coordinate Zn(2+).

This sequence belongs to the class-II aminoacyl-tRNA synthetase family. In terms of assembly, homodimer. The cofactor is Zn(2+).

The protein localises to the cytoplasm. It catalyses the reaction tRNA(Thr) + L-threonine + ATP = L-threonyl-tRNA(Thr) + AMP + diphosphate + H(+). In terms of biological role, catalyzes the attachment of threonine to tRNA(Thr) in a two-step reaction: L-threonine is first activated by ATP to form Thr-AMP and then transferred to the acceptor end of tRNA(Thr). Also edits incorrectly charged L-seryl-tRNA(Thr). In Rickettsia akari (strain Hartford), this protein is Threonine--tRNA ligase.